Consider the following 198-residue polypeptide: MPKIGMEPLRRRELIDAAIRTIGQRGSLDVTVAQIAHEAGVSPALAHHYFGGKDKLILATMRHLLRELGRDLNAAIKQANTPHERIAAIIAVNFSAAQFAQETIAAWLTFYVHAQQSDDIKRLLRIYARRLHSNLVFALEQLTSRARANRIAEGAGAMIDGLYIRHALGADVPDAASAIALVEDYIAIQLSGQPSAEN.

One can recognise an HTH tetR-type domain in the interval 8 to 68 (PLRRRELIDA…ATMRHLLREL (61 aa)). The H-T-H motif DNA-binding region spans 31-50 (TVAQIAHEAGVSPALAHHYF).

The protein operates within amine and polyamine biosynthesis; betaine biosynthesis via choline pathway [regulation]. Functionally, repressor involved in the biosynthesis of the osmoprotectant glycine betaine. It represses transcription of the choline transporter BetT and the genes of BetAB involved in the synthesis of glycine betaine. The chain is HTH-type transcriptional regulator BetI from Brucella suis (strain ATCC 23445 / NCTC 10510).